The chain runs to 644 residues: Type III restriction-modification enzyme EcoP15I Mod subunit (644 aa).

The segment at 123-126 (DPPY) is binding of S-adenosyl methionine.

It belongs to the N(4)/N(6)-methyltransferase family. Forms a homodimer capable of methylating the target sequence in the absence of Res. A heterotetramer with stoichiometry Res(2)Mod(2). A heterotrimer with stoichiometry Res(1)Mod(2).

The catalysed reaction is a 2'-deoxyadenosine in DNA + S-adenosyl-L-methionine = an N(6)-methyl-2'-deoxyadenosine in DNA + S-adenosyl-L-homocysteine + H(+). Its function is as follows. A beta subtype methylase that binds the system-specific DNA recognition site 5'-CAGCAG-3' and methylates A-5 (of only 1 strand as the other does not have an A residue). DNA restriction requires both the Res and Mod subunits. The A-5 nucleotide flips into the catalytic pocket of one Mod subunit for modification, while the other Mod subunit makes most of the DNA sequence-specific contacts. The chain is Type III restriction-modification enzyme EcoP15I Mod subunit from Escherichia coli.